The sequence spans 607 residues: ATP-dependent RNA helicase-like protein DB10 (607 aa).

Positions 1 to 10 (MAVVTASSAG) are enriched in polar residues. 2 disordered regions span residues 1-25 (MAVV…KPWK) and 66-108 (VFVS…DGTS). The WW domain occupies 18 to 52 (PTLPKPWKGLVDGTTGFIYFWNPETNDTQYERPVP). The span at 89–98 (RGSNNKIARS) shows a compositional bias: polar residues. The segment covering 99–108 (SSDRFHDGTS) has biased composition (basic and acidic residues). Positions 145–173 (TSFEATGFPSEIVREMHQAGFSAPTPIQA) match the Q motif motif. Residues 176–350 (WPIALQGRDI…ADLLVNSVQV (175 aa)) form the Helicase ATP-binding domain. Position 189–196 (189–196 (AKTGSGKT)) interacts with ATP. Positions 298–301 (DEAD) match the DEAD box motif. The Helicase C-terminal domain occupies 379–523 (RVEQILRSKE…CVPTELRDMA (145 aa)). The disordered stretch occupies residues 519–607 (LRDMASRGGG…WSGKKSRFTD (89 aa)). Residues 538-548 (SGPGGRGGRGG) are compositionally biased toward gly residues. Basic and acidic residues predominate over residues 562–574 (GYDRGSRDSDRYG).

It belongs to the DEAD box helicase family.

It carries out the reaction ATP + H2O = ADP + phosphate + H(+). The polypeptide is ATP-dependent RNA helicase-like protein DB10 (Nicotiana sylvestris (Wood tobacco)).